Reading from the N-terminus, the 197-residue chain is dITP/XTP pyrophosphatase (197 aa).

Substrate is bound at residue 8-13; that stretch reads TGNAGK. Positions 40 and 69 each coordinate Mg(2+). Catalysis depends on Asp69, which acts as the Proton acceptor. Substrate is bound by residues Ser70, 154–157, Lys177, and 182–183; these read FGYD and HR.

It belongs to the HAM1 NTPase family. In terms of assembly, homodimer. Requires Mg(2+) as cofactor.

The catalysed reaction is XTP + H2O = XMP + diphosphate + H(+). It carries out the reaction dITP + H2O = dIMP + diphosphate + H(+). The enzyme catalyses ITP + H2O = IMP + diphosphate + H(+). Its function is as follows. Pyrophosphatase that catalyzes the hydrolysis of nucleoside triphosphates to their monophosphate derivatives, with a high preference for the non-canonical purine nucleotides XTP (xanthosine triphosphate), dITP (deoxyinosine triphosphate) and ITP. Seems to function as a house-cleaning enzyme that removes non-canonical purine nucleotides from the nucleotide pool, thus preventing their incorporation into DNA/RNA and avoiding chromosomal lesions. The polypeptide is dITP/XTP pyrophosphatase (rdgB) (Shigella flexneri).